Consider the following 62-residue polypeptide: uncharacterized protein (62 aa).

2 consecutive transmembrane segments (helical) span residues 9 to 29 and 42 to 62; these read HNEL…ALIG and AAVV…LQLL.

The protein resides in the membrane. This is an uncharacterized protein from Saccharomyces cerevisiae (strain ATCC 204508 / S288c) (Baker's yeast).